The sequence spans 248 residues: Ribonuclease 3 (248 aa).

The RNase III domain occupies 6–136 (LAYLQTLIGS…LIGAIYLDKG (131 aa)). Glu49 contributes to the Mg(2+) binding site. Residue Asp53 is part of the active site. Asp122 and Glu125 together coordinate Mg(2+). Glu125 is a catalytic residue. Positions 163–231 (NYKSCLIEYS…AKEAMERIIA (69 aa)) constitute a DRBM domain.

Belongs to the ribonuclease III family. As to quaternary structure, homodimer. It depends on Mg(2+) as a cofactor.

It is found in the cytoplasm. The catalysed reaction is Endonucleolytic cleavage to 5'-phosphomonoester.. Its function is as follows. Digests double-stranded RNA. Involved in the processing of primary rRNA transcript to yield the immediate precursors to the large and small rRNAs (23S and 16S). Processes some mRNAs, and tRNAs when they are encoded in the rRNA operon. Processes pre-crRNA and tracrRNA of type II CRISPR loci if present in the organism. This is Ribonuclease 3 from Chlorobium chlorochromatii (strain CaD3).